The sequence spans 445 residues: Flagellum-associated coiled-coil domain-containing protein 1 (445 aa).

Positions 26 to 47 (PQLPRKNSTGSSKLTPLVPAPK) are disordered. Positions 30–39 (RKNSTGSSKL) are enriched in polar residues. Coiled-coil stretches lie at residues 122–226 (SRTN…TYQD) and 283–315 (AVFE…TKEV). An N6-acetyllysine modification is found at K376. Residues 387–414 (EKYKHTIQILTEENIHLKQKIISKNEEI) adopt a coiled-coil conformation.

The protein resides in the cytoplasm. It is found in the cytoplasmic granule. Its subcellular location is the cell projection. It localises to the cilium. The protein localises to the flagellum. This is Flagellum-associated coiled-coil domain-containing protein 1 from Homo sapiens (Human).